The primary structure comprises 258 residues: 5'-nucleotidase SurE (258 aa).

Residues aspartate 16, aspartate 17, serine 47, and asparagine 99 each coordinate a divalent metal cation.

Belongs to the SurE nucleotidase family. The cofactor is a divalent metal cation.

It localises to the cytoplasm. The enzyme catalyses a ribonucleoside 5'-phosphate + H2O = a ribonucleoside + phosphate. Its function is as follows. Nucleotidase that shows phosphatase activity on nucleoside 5'-monophosphates. The protein is 5'-nucleotidase SurE of Coxiella burnetii (strain Dugway 5J108-111).